The chain runs to 1025 residues: Multidrug resistance protein MdtC (1025 aa).

The next 12 helical transmembrane spans lie at 3 to 23, 333 to 353, 360 to 380, 387 to 407, 431 to 451, 469 to 489, 528 to 548, 853 to 873, 875 to 895, 897 to 917, 953 to 973, and 984 to 1004; these read FFAL…AITL, EVEQ…FLFL, IIPA…MYLC, LSLM…IVVL, VGFT…PLLL, VAIG…CGWM, LVGV…ISIP, VILI…LYES, VHPL…LLAL, LFNA…IGIV, PIMM…LSGG, and ITIV…TPVV.

The protein belongs to the resistance-nodulation-cell division (RND) (TC 2.A.6) family. MdtC subfamily. As to quaternary structure, part of a tripartite efflux system composed of MdtA, MdtB and MdtC. MdtC forms a heteromultimer with MdtB.

Its subcellular location is the cell inner membrane. Functionally, the MdtABC tripartite complex confers resistance against novobiocin and deoxycholate. The sequence is that of Multidrug resistance protein MdtC from Escherichia coli O9:H4 (strain HS).